We begin with the raw amino-acid sequence, 354 residues long: tRNA N6-adenosine threonylcarbamoyltransferase (354 aa).

2 residues coordinate Fe cation: His115 and His119. Residues 138 to 142, Asp171, Gly184, and Asn276 each bind substrate; that span reads LVSGG. Asp304 serves as a coordination point for Fe cation.

This sequence belongs to the KAE1 / TsaD family. The cofactor is Fe(2+).

It localises to the cytoplasm. It carries out the reaction L-threonylcarbamoyladenylate + adenosine(37) in tRNA = N(6)-L-threonylcarbamoyladenosine(37) in tRNA + AMP + H(+). Required for the formation of a threonylcarbamoyl group on adenosine at position 37 (t(6)A37) in tRNAs that read codons beginning with adenine. Is involved in the transfer of the threonylcarbamoyl moiety of threonylcarbamoyl-AMP (TC-AMP) to the N6 group of A37, together with TsaE and TsaB. TsaD likely plays a direct catalytic role in this reaction. This chain is tRNA N6-adenosine threonylcarbamoyltransferase, found in Xanthomonas campestris pv. campestris (strain 8004).